A 192-amino-acid chain; its full sequence is Phosphoheptose isomerase (192 aa).

Residues 37–192 (LADSFKAGGK…IQLIEKEMVK (156 aa)) enclose the SIS domain. Residue 52 to 54 (NGG) coordinates substrate. Positions 61 and 65 each coordinate Zn(2+). Substrate contacts are provided by residues Glu65, 93–94 (ND), 119–121 (STS), Ser124, and Gln172. Residues Gln172 and His180 each coordinate Zn(2+).

Belongs to the SIS family. GmhA subfamily. As to quaternary structure, homotetramer. The cofactor is Zn(2+).

It is found in the cytoplasm. The catalysed reaction is 2 D-sedoheptulose 7-phosphate = D-glycero-alpha-D-manno-heptose 7-phosphate + D-glycero-beta-D-manno-heptose 7-phosphate. It participates in carbohydrate biosynthesis; D-glycero-D-manno-heptose 7-phosphate biosynthesis; D-glycero-alpha-D-manno-heptose 7-phosphate and D-glycero-beta-D-manno-heptose 7-phosphate from sedoheptulose 7-phosphate: step 1/1. In terms of biological role, catalyzes the isomerization of sedoheptulose 7-phosphate in D-glycero-D-manno-heptose 7-phosphate. The polypeptide is Phosphoheptose isomerase (Escherichia coli O139:H28 (strain E24377A / ETEC)).